We begin with the raw amino-acid sequence, 298 residues long: MPTTTDAASPARPRTGRTAVRAHASVRVERGPQGAPRLAELRSDVPIVLRMTGVSPVRTGARAGAGARADPGPLPTMTVHLVNGAAGPLAGDDLRLDISVGGGVRLVLRSVAATVALPGRGPGPSRLTVTAEVADGGELDLGPEPTVVADGADHQISTDVRLAATARLRLREEILLGRFGEPGGSILSTLRVDVAGGAEGPGADLAGGPFGWVPLLRQELLLGPQVPGLRGPAQLGGARAVGSLLVVAPAWAGAGPDAAVAEGVARLPLTGPGYLVSALADDAVTLRRRLTALADPTG.

This sequence belongs to the UreD family. UreD, UreF and UreG form a complex that acts as a GTP-hydrolysis-dependent molecular chaperone, activating the urease apoprotein by helping to assemble the nickel containing metallocenter of UreC. The UreE protein probably delivers the nickel.

Its subcellular location is the cytoplasm. Its function is as follows. Required for maturation of urease via the functional incorporation of the urease nickel metallocenter. The sequence is that of Urease accessory protein UreD from Frankia alni (strain DSM 45986 / CECT 9034 / ACN14a).